Reading from the N-terminus, the 603-residue chain is Probable potassium transport system protein Kup (603 aa).

Helical transmembrane passes span 15–35 (GLVF…IFLL), 43–63 (VIGV…VEYA), 94–114 (AAFI…DGVI), 136–156 (IGQG…FSVQ), 163–183 (ITWV…FSGI), 201–221 (AISF…EVIL), 244–264 (AWRL…AFII), 284–304 (IYIP…QAMI), 336–356 (IYIG…IFEF), 367–387 (GLAV…IFYL), 391–411 (MFRS…LLSN), and 415–435 (IPHG…LIII).

The protein belongs to the HAK/KUP transporter (TC 2.A.72) family.

It is found in the cell membrane. The catalysed reaction is K(+)(in) + H(+)(in) = K(+)(out) + H(+)(out). Transport of potassium into the cell. Likely operates as a K(+):H(+) symporter. The sequence is that of Probable potassium transport system protein Kup from Methanosarcina acetivorans (strain ATCC 35395 / DSM 2834 / JCM 12185 / C2A).